The following is a 231-amino-acid chain: uncharacterized protein (231 aa).

4 consecutive transmembrane segments (helical) span residues 39–59 (FCISVISFFLLAIITLTYGPF), 70–90 (ALSLYFINVIMGVTYLSVPVI), 156–176 (AIISILCLSYSAICIVNGGSI), and 189–206 (IVAIMFFILYTSLMNMFF).

It belongs to the FliR/MopE/SpaR family.

Its subcellular location is the cell membrane. This is an uncharacterized protein from Escherichia coli (strain K12).